A 349-amino-acid polypeptide reads, in one-letter code: Hypoxia-inducible factor 1-alpha inhibitor (349 aa).

Over residues 1-14 (MAATAAEVAASGSG) the composition is skewed to low complexity. A disordered region spans residues 1–51 (MAATAAEVAASGSGEAREEAEAPGPAWDESQLRSYSFPTRPIPRLSQSDPR). Ala-2 is modified (N-acetylalanine). The interaction with VHL stretch occupies residues 2–125 (AATAAEVAAS…PRSNREEIKF (124 aa)). The JmjC domain maps to 142–307 (ERLYLQQTLN…KGAPTPKRIE (166 aa)). Tyr-145 is a 2-oxoglutarate binding site. Substrate is bound by residues Asp-152 and 181-183 (QLT). 2-oxoglutarate is bound at residue Thr-196. His-199 and Asp-201 together coordinate Fe cation. 201 to 203 (DEQ) contributes to the substrate binding site. 2-oxoglutarate-binding residues include Asn-205 and Lys-214. Position 238–239 (238–239 (RQ)) interacts with substrate. A Fe cation-binding site is contributed by His-279. Asn-294 provides a ligand contact to 2-oxoglutarate. Substrate-binding residues include Ala-300 and Asn-321.

Homodimer; homodimerization is essential for catalytic activity. Interacts with VHL and HIF1A. Part of a complex with VHL, HIF1A and HDAC1 or HDAC2 or HDAC3. Interacts with NFKB1 and NFKBIA. Interacts with NOTCH1, NOTCH2 and NOTCH3 but not with NOTCH4. Interacts with ABPA3. Interacts with TNKS2. Interacts with PPP1R12A. Interacts with UBE3A. Interacts with ASB4. Interacts with ANKS3. Interacts with NECAB3; the interaction is indirect and seems to be mediated by APBA3. Fe(2+) serves as cofactor.

Its subcellular location is the nucleus. The protein localises to the cytoplasm. The protein resides in the perinuclear region. It catalyses the reaction L-asparaginyl-[hypoxia-inducible factor alpha subunit] + 2-oxoglutarate + O2 = (3S)-3-hydroxy-L-asparaginyl-[hypoxia-inducible factor alpha subunit] + succinate + CO2. The enzyme catalyses L-histidyl-[ankyrin-repeat domain protein] + 2-oxoglutarate + O2 = (3S)-3-hydroxy-L-histidyl-[ankyrin-repeat domain protein] + succinate + CO2. The catalysed reaction is L-asparaginyl-[ankyrin-repeat domain protein] + 2-oxoglutarate + O2 = (3S)-3-hydroxy-L-asparaginyl-[ankyrin-repeat domain protein] + succinate + CO2. It carries out the reaction L-aspartyl-[ankyrin-repeat domain protein] + 2-oxoglutarate + O2 = (3S)-3-hydroxy-L-aspartyl-[ankyrin-repeat domain protein] + succinate + CO2. Functionally, hydroxylates HIF-1 alpha at 'Asn-799' in the C-terminal transactivation domain (CAD). Functions as an oxygen sensor and, under normoxic conditions, the hydroxylation prevents interaction of HIF-1 with transcriptional coactivators including Cbp/p300-interacting transactivator. Involved in transcriptional repression through interaction with HIF1A, VHL and histone deacetylases. Hydroxylates specific Asn residues within ankyrin repeat domains (ARD) of NFKB1, NFKBIA, NOTCH1, ASB4, PPP1R12A and several other ARD-containing proteins. Also hydroxylates Asp and His residues within ARDs of ANK1 and TNKS2, respectively. Negatively regulates NOTCH1 activity, accelerating myogenic differentiation. Positively regulates ASB4 activity, promoting vascular differentiation. This Mus musculus (Mouse) protein is Hypoxia-inducible factor 1-alpha inhibitor (Hif1an).